Consider the following 159-residue polypeptide: 2-C-methyl-D-erythritol 2,4-cyclodiphosphate synthase (159 aa).

A divalent metal cation-binding residues include D8 and H10. 4-CDP-2-C-methyl-D-erythritol 2-phosphate-binding positions include 8-10 (DVH) and 34-35 (HS). An a divalent metal cation-binding site is contributed by H42. 4-CDP-2-C-methyl-D-erythritol 2-phosphate is bound by residues 56–58 (DIG), 61–65 (FPDTD), 100–106 (AQAPKML), 132–135 (TTTE), F139, and R142.

This sequence belongs to the IspF family. Homotrimer. A divalent metal cation serves as cofactor.

It catalyses the reaction 4-CDP-2-C-methyl-D-erythritol 2-phosphate = 2-C-methyl-D-erythritol 2,4-cyclic diphosphate + CMP. It functions in the pathway isoprenoid biosynthesis; isopentenyl diphosphate biosynthesis via DXP pathway; isopentenyl diphosphate from 1-deoxy-D-xylulose 5-phosphate: step 4/6. Functionally, involved in the biosynthesis of isopentenyl diphosphate (IPP) and dimethylallyl diphosphate (DMAPP), two major building blocks of isoprenoid compounds. Catalyzes the conversion of 4-diphosphocytidyl-2-C-methyl-D-erythritol 2-phosphate (CDP-ME2P) to 2-C-methyl-D-erythritol 2,4-cyclodiphosphate (ME-CPP) with a corresponding release of cytidine 5-monophosphate (CMP). This Citrobacter koseri (strain ATCC BAA-895 / CDC 4225-83 / SGSC4696) protein is 2-C-methyl-D-erythritol 2,4-cyclodiphosphate synthase.